The following is a 276-amino-acid chain: MSARWTTAVLDPQMTGGLAVARSPEGFLVDANGALFPRDWLKRQDLDVLCEHGIGHFDGQPVFLLELRSATDVPGCSWRGLRAFMLEGDFDTYKVLGYAAQIGTWAREHRFCGSCGQAMTQIRWERAMYCQPCDLRSYPRISPSMIVLVTRGDEILLARSPRFVTGVYSTLAGFAEPGESAEDCLVREVREEVAVEVRNIQYVGSQCWPFPHSMMLGFHAEYAGGEIVMQPDEIEDAKWFSVHDLPPLPAGRSIARYLIDLYVARRLGCDIPAFPS.

Arg-82 lines the substrate pocket. Positions 112 and 115 each coordinate Zn(2+). Glu-125 contributes to the substrate binding site. 2 residues coordinate Zn(2+): Cys-130 and Cys-133. Tyr-138 is a substrate binding site. Residues 139 to 262 (PRISPSMIVL…SIARYLIDLY (124 aa)) enclose the Nudix hydrolase domain. Residues Ala-172, Glu-188, and Glu-192 each coordinate a divalent metal cation. A Nudix box motif is present at residues 173-194 (GFAEPGESAEDCLVREVREEVA). A substrate-binding site is contributed by 206–213 (QCWPFPHS). Glu-233 is an a divalent metal cation binding site. Ala-255 provides a ligand contact to substrate.

It belongs to the Nudix hydrolase family. NudC subfamily. In terms of assembly, homodimer. Mg(2+) serves as cofactor. Requires Mn(2+) as cofactor. It depends on Zn(2+) as a cofactor.

The enzyme catalyses a 5'-end NAD(+)-phospho-ribonucleoside in mRNA + H2O = a 5'-end phospho-adenosine-phospho-ribonucleoside in mRNA + beta-nicotinamide D-ribonucleotide + 2 H(+). It carries out the reaction NAD(+) + H2O = beta-nicotinamide D-ribonucleotide + AMP + 2 H(+). The catalysed reaction is NADH + H2O = reduced beta-nicotinamide D-ribonucleotide + AMP + 2 H(+). MRNA decapping enzyme that specifically removes the nicotinamide adenine dinucleotide (NAD) cap from a subset of mRNAs by hydrolyzing the diphosphate linkage to produce nicotinamide mononucleotide (NMN) and 5' monophosphate mRNA. The NAD-cap is present at the 5'-end of some mRNAs and stabilizes RNA against 5'-processing. Has preference for mRNAs with a 5'-end purine. Catalyzes the hydrolysis of a broad range of dinucleotide pyrophosphates. In Pseudomonas putida (strain ATCC 700007 / DSM 6899 / JCM 31910 / BCRC 17059 / LMG 24140 / F1), this protein is NAD-capped RNA hydrolase NudC.